The sequence spans 95 residues: MTITKEKIATMLSSKLGFSNNLCEEIVNTVFFNILEIAKEQKLTLKNFGSFEVKQKNPRPGINFHTKSPIIIESKKNLRFIPSTKLKALINEHDK.

This sequence belongs to the bacterial histone-like protein family.

This chain is Histone-like DNA-binding protein, found in Rickettsia felis (strain ATCC VR-1525 / URRWXCal2) (Rickettsia azadi).